A 515-amino-acid chain; its full sequence is Maturase K (515 aa).

It belongs to the intron maturase 2 family. MatK subfamily.

The protein localises to the plastid. It localises to the chloroplast. Functionally, usually encoded in the trnK tRNA gene intron. Probably assists in splicing its own and other chloroplast group II introns. In Pinus roxburghii (Chir pine), this protein is Maturase K.